The following is a 366-amino-acid chain: Aminomethyltransferase (366 aa).

It belongs to the GcvT family. As to quaternary structure, the glycine cleavage system is composed of four proteins: P, T, L and H.

It carries out the reaction N(6)-[(R)-S(8)-aminomethyldihydrolipoyl]-L-lysyl-[protein] + (6S)-5,6,7,8-tetrahydrofolate = N(6)-[(R)-dihydrolipoyl]-L-lysyl-[protein] + (6R)-5,10-methylene-5,6,7,8-tetrahydrofolate + NH4(+). In terms of biological role, the glycine cleavage system catalyzes the degradation of glycine. This Bacillus cytotoxicus (strain DSM 22905 / CIP 110041 / 391-98 / NVH 391-98) protein is Aminomethyltransferase.